Here is a 255-residue protein sequence, read N- to C-terminus: Pyrroloquinoline-quinone synthase (255 aa).

It belongs to the PqqC family.

It carries out the reaction 6-(2-amino-2-carboxyethyl)-7,8-dioxo-1,2,3,4,7,8-hexahydroquinoline-2,4-dicarboxylate + 3 O2 = pyrroloquinoline quinone + 2 H2O2 + 2 H2O + H(+). Its pathway is cofactor biosynthesis; pyrroloquinoline quinone biosynthesis. Functionally, ring cyclization and eight-electron oxidation of 3a-(2-amino-2-carboxyethyl)-4,5-dioxo-4,5,6,7,8,9-hexahydroquinoline-7,9-dicarboxylic-acid to PQQ. The chain is Pyrroloquinoline-quinone synthase from Granulibacter bethesdensis (strain ATCC BAA-1260 / CGDNIH1).